The sequence spans 439 residues: Arginine biosynthesis bifunctional protein ArgJ, mitochondrial (439 aa).

Residues threonine 175, lysine 201, threonine 212, glutamate 301, asparagine 434, and serine 439 each coordinate substrate. Threonine 212 functions as the Nucleophile in the catalytic mechanism.

The protein belongs to the ArgJ family. As to quaternary structure, heterodimer of an alpha and a beta chain. In terms of processing, the alpha and beta chains are autoproteolytically processed from a single precursor protein within the mitochondrion.

The protein resides in the mitochondrion matrix. It carries out the reaction N(2)-acetyl-L-ornithine + L-glutamate = N-acetyl-L-glutamate + L-ornithine. It catalyses the reaction L-glutamate + acetyl-CoA = N-acetyl-L-glutamate + CoA + H(+). The protein operates within amino-acid biosynthesis; L-arginine biosynthesis; L-ornithine and N-acetyl-L-glutamate from L-glutamate and N(2)-acetyl-L-ornithine (cyclic): step 1/1. It functions in the pathway amino-acid biosynthesis; L-arginine biosynthesis; N(2)-acetyl-L-ornithine from L-glutamate: step 1/4. Its function is as follows. Catalyzes two activities which are involved in the cyclic version of arginine biosynthesis: the synthesis of acetylglutamate from glutamate and acetyl-CoA, and of ornithine by transacetylation between acetylornithine and glutamate. This Candida albicans (strain SC5314 / ATCC MYA-2876) (Yeast) protein is Arginine biosynthesis bifunctional protein ArgJ, mitochondrial (ECM42).